Here is a 101-residue protein sequence, read N- to C-terminus: Small ribosomal subunit protein uS14A (101 aa).

The tract at residues 31–73 (IKSPSTTPEARVAAQSELNRQPRDASPVRVRNRDSVDGRPRGH) is disordered. Basic and acidic residues predominate over residues 61 to 70 (RNRDSVDGRP).

It belongs to the universal ribosomal protein uS14 family. Part of the 30S ribosomal subunit. Contacts proteins S3 and S10.

Its function is as follows. Binds 16S rRNA, required for the assembly of 30S particles and may also be responsible for determining the conformation of the 16S rRNA at the A site. The protein is Small ribosomal subunit protein uS14A of Mycolicibacterium vanbaalenii (strain DSM 7251 / JCM 13017 / BCRC 16820 / KCTC 9966 / NRRL B-24157 / PYR-1) (Mycobacterium vanbaalenii).